Here is a 147-residue protein sequence, read N- to C-terminus: Histone H2B (147 aa).

Positions 1 to 31 (MAPKAEKKPAEKKPAEEKKAVAEKAPAEKKP) are enriched in basic and acidic residues. The segment at 1-55 (MAPKAEKKPAEKKPAEEKKAVAEKAPAEKKPKAGKKLPKEGGAAAGDKKKKRVKK) is disordered. 3 positions are modified to N6-acetyllysine: Lys-7, Lys-35, and Lys-36. Residue Lys-143 forms a Glycyl lysine isopeptide (Lys-Gly) (interchain with G-Cter in ubiquitin) linkage.

Belongs to the histone H2B family. In terms of assembly, the nucleosome is a histone octamer containing two molecules each of H2A, H2B, H3 and H4 assembled in one H3-H4 heterotetramer and two H2A-H2B heterodimers. The octamer wraps approximately 147 bp of DNA. In terms of processing, can be acetylated to form H2BK6ac, H2BK33ac and H2BK34ac. Post-translationally, monoubiquitinated to form H2BK143ub1; may give a specific tag for epigenetic transcriptional activation.

Its subcellular location is the nucleus. It is found in the chromosome. In terms of biological role, core component of nucleosome. Nucleosomes wrap and compact DNA into chromatin, limiting DNA accessibility to the cellular machineries which require DNA as a template. Histones thereby play a central role in transcription regulation, DNA repair, DNA replication and chromosomal stability. DNA accessibility is regulated via a complex set of post-translational modifications of histones, also called histone code, and nucleosome remodeling. This Gossypium hirsutum (Upland cotton) protein is Histone H2B (HIS2B).